A 370-amino-acid chain; its full sequence is ATP synthase gamma chain, chloroplastic (370 aa).

The transit peptide at 1–55 directs the protein to the chloroplast; sequence MKFFCVAGLLASAAAFQAQPAAFTTYSPAVGGATSNVFSESSSPAHRNRRATIVM. The active site involves Cys-145.

Belongs to the ATPase gamma chain family. In terms of assembly, F-type ATPases have 2 components, CF(1) - the catalytic core - and CF(0) - the membrane proton channel. CF(1) has five subunits: alpha(3), beta(3), gamma(1), delta(1), epsilon(1). CF(0) has four main subunits: a, b, b' and c.

Its subcellular location is the plastid. The protein localises to the chloroplast thylakoid membrane. Produces ATP from ADP in the presence of a proton gradient across the membrane. The gamma chain is believed to be important in regulating ATPase activity and the flow of protons through the CF(0) complex. The chain is ATP synthase gamma chain, chloroplastic (ATPC) from Trieres chinensis (Marine centric diatom).